The sequence spans 1029 residues: Toll-like receptor 9 (1029 aa).

Residues 1–24 (MGPYCAPHPLSLLVQAAALAAALA) form the signal peptide. Residues 25–815 (EGTLPAFLPC…LCLDETLSLD (791 aa)) lie on the Extracellular side of the membrane. Cysteine 34 and cysteine 44 are joined by a disulfide. 46–50 (WLFLK) provides a ligand contact to DNA. LRR repeat units lie at residues 61–84 (RANVTSLSLISNRIHHLHDSDFVH), 86–109 (SNLRVLNLKWNCPPAGLSPMHFPC), 121–146 (VPTLEELNLSYNGITTVPALPSSLVS), 149–165 (LSHTSILVLGPTHFTGL), 166–189 (HALRFLYMDGNCYYMNPCPRALEV), 197–220 (LGNLTHLSLKYNNLTEVPRRLPPS), 222–241 (DTLLLSYNHIVTLAPEDLAN), 242–267 (LTALRVLDVGGNCRRCDHARNPCREC), 282–305 (LSRLEGLVLKDSSLYKLEKDWFRG), 307–331 (GRLQVLDLSENFLYDYITKTTIFND), 332–355 (LTQLRRLNLSFNYHKKVSFAHLHL), 362–385 (LVSLEKLDMHGIFFRSLTNITLQS), 389–412 (LPKLQSLHLQLNFINQAQLSIFGA), 414–439 (PSLLFVDLSDNRISGAATPAAALGEV), 469–492 (CNLNFTLDLSRNNLVTIQQEMFTR), 494–517 (SRLQCLRLSHNSISQAVNGSQFVP), 518–541 (LTSLRVLDLSHNKLDLYHGRSFTE), 543–570 (PQLEALDLSYNSQPFSMQGVGHNLSFVA), 572–596 (LPSLRYLSLAHNGIHSRVSQKLSSA), 598–620 (LRALDFSGNSLSQMWAEGDLYLC), 625–648 (LRNLVQLDLSENHLHTLLPRHLDN), 650–673 (PKSLRQLRLRDNNLAFFNWSSLTV), 674–697 (LPRLEALDLAGNQLKALSNGSLPP), 699–721 (IRLQKLDVSSNSIGFVIPGFFVR), 722–745 (ATRLIELNLSANALKTVDPSWFGS), and 747–770 (AGTLKILDVSANPLHCACGAAFVD). N-linked (GlcNAc...) asparagine glycosylation is present at asparagine 63. Residues 71 to 76 (SNRIHH) and 94 to 108 (KWNCPPAGLSPMHFP) each bind DNA. An intrachain disulfide couples cysteine 97 to cysteine 109. Asparagine 128 carries N-linked (GlcNAc...) asparagine glycosylation. Tyrosine 131 is a DNA binding site. A disulfide bond links cysteine 177 and cysteine 183. A DNA-binding site is contributed by 178-180 (YYM). An N-linked (GlcNAc...) asparagine glycan is attached at asparagine 199. Tyrosine 207 contributes to the DNA binding site. Asparagine 209 and asparagine 241 each carry an N-linked (GlcNAc...) asparagine glycan. Disulfide bonds link cysteine 254–cysteine 267 and cysteine 257–cysteine 264. Residue cysteine 257 is the site of S-palmitoyl cysteine attachment. A DNA-binding site is contributed by arginine 261. Cysteine 264 carries the S-palmitoyl cysteine lipid modification. N-linked (GlcNAc...) asparagine glycosylation is found at asparagine 339 and asparagine 380. A disulfide bond links cysteine 469 and cysteine 498. Residues asparagine 472 and asparagine 511 are each glycosylated (N-linked (GlcNAc...) asparagine). A glycan (N-linked (GlcNAc...) asparagine) is linked at asparagine 565. N-linked (GlcNAc...) asparagine glycans are attached at residues asparagine 667 and asparagine 692. The N-linked (GlcNAc...) asparagine glycan is linked to asparagine 729. Intrachain disulfides connect cysteine 762-cysteine 788 and cysteine 764-cysteine 807. A helical transmembrane segment spans residues 816-836 (CFGLSLLMVALGLAVPMLHHL). The Cytoplasmic portion of the chain corresponds to 837-1029 (CGWDLWYCFH…NFCRGPTTAE (193 aa)). The TIR domain occupies 864-1009 (LLYDAVVVFD…SFWANLGIAL (146 aa)).

This sequence belongs to the Toll-like receptor family. Monomer and homodimer. Exists as a monomer in the absence of unmethylated cytidine-phosphate-guanosine (CpG) ligand. Proteolytic processing of an insertion loop (Z-loop) is required for homodimerization upon binding to the unmethylated CpG ligand leading to its activation. Interacts with MYD88 via their respective TIR domains. Interacts with BTK. Interacts (via transmembrane domain) with UNC93B1. Interacts with CD300LH; the interaction may promote full activation of TLR9-triggered innate responses. Interacts with CNPY3 and HSP90B1; this interaction is required for proper folding in the endoplasmic reticulum. Interacts with SMPDL3B. Interacts with CD82; this interaction is essential for TLR9-dependent myddosome formation in response to CpG stimulation. In terms of processing, activated by proteolytic cleavage of the flexible loop between repeats LRR14 and LRR15 within the ectodomain. Cleavage requires UNC93B1. Proteolytically processed by first removing the majority of the ectodomain by either asparagine endopeptidase (AEP) or a cathepsin followed by a trimming event that is solely cathepsin mediated and required for optimal receptor signaling. Palmitoylated by ZDHHC3 in the Golgi regulates TLR9 trafficking from the Golgi to endosomes. Depalmitoylation by PPT1 controls the release of TLR9 from UNC93B1 in endosomes.

The protein localises to the endoplasmic reticulum membrane. The protein resides in the endosome. It localises to the lysosome. Its subcellular location is the cytoplasmic vesicle. It is found in the phagosome. Functionally, key component of innate and adaptive immunity. TLRs (Toll-like receptors) control host immune response against pathogens through recognition of molecular patterns specific to microorganisms. TLR9 is a nucleotide-sensing TLR which is activated by unmethylated cytidine-phosphate-guanosine (CpG) dinucleotides. Acts via MYD88 and TRAF6, leading to NF-kappa-B activation, cytokine secretion and the inflammatory response. Upon CpG stimulation, induces B-cell proliferation, activation, survival and antibody production. In Bos taurus (Bovine), this protein is Toll-like receptor 9 (TLR9).